The primary structure comprises 167 residues: Mitochondrial fission 1 protein B (167 aa).

Residues 92–125 (REKLYLLALGYYRSGDFSRSRDCIERCLEVEPES) form a TPR repeat. A helical transmembrane segment spans residues 144 to 164 (VIGVGIAVTAVGVVAGIAAAI).

The protein belongs to the FIS1 family. In terms of assembly, interacts with PEX11A, PEX11B, PEX11C, PEX11D and PEX11E.

It localises to the mitochondrion outer membrane. It is found in the peroxisome membrane. Its function is as follows. Component of the peroxisomal and mitochondrial division machineries. Plays a role in promoting the fission of mitochondria and peroxisomes. In association with PEX11C, PEX11D, PEX11E and DRP3A, is involved in cell cycle-associated constitutive self-replication of preexisting peroxisomes. The polypeptide is Mitochondrial fission 1 protein B (FIS1B) (Arabidopsis thaliana (Mouse-ear cress)).